Here is a 156-residue protein sequence, read N- to C-terminus: Small ribosomal subunit protein uS7 (156 aa).

Belongs to the universal ribosomal protein uS7 family. Part of the 30S ribosomal subunit. Contacts proteins S9 and S11.

Its function is as follows. One of the primary rRNA binding proteins, it binds directly to 16S rRNA where it nucleates assembly of the head domain of the 30S subunit. Is located at the subunit interface close to the decoding center, probably blocks exit of the E-site tRNA. This is Small ribosomal subunit protein uS7 from Synechococcus elongatus (strain ATCC 33912 / PCC 7942 / FACHB-805) (Anacystis nidulans R2).